The chain runs to 396 residues: Argininosuccinate synthase (396 aa).

ATP is bound at residue 9–17 (AYSGGLDTS). Tyrosine 85 contributes to the L-citrulline binding site. Position 115 (glycine 115) interacts with ATP. Residues threonine 117, asparagine 121, and aspartate 122 each contribute to the L-aspartate site. Asparagine 121 serves as a coordination point for L-citrulline. Residues arginine 125, serine 173, glutamate 258, and tyrosine 270 each contribute to the L-citrulline site.

It belongs to the argininosuccinate synthase family. Type 1 subfamily. As to quaternary structure, homotetramer.

The protein resides in the cytoplasm. The enzyme catalyses L-citrulline + L-aspartate + ATP = 2-(N(omega)-L-arginino)succinate + AMP + diphosphate + H(+). The protein operates within amino-acid biosynthesis; L-arginine biosynthesis; L-arginine from L-ornithine and carbamoyl phosphate: step 2/3. In Streptococcus agalactiae serotype V (strain ATCC BAA-611 / 2603 V/R), this protein is Argininosuccinate synthase.